The following is a 210-amino-acid chain: Probable GTP-binding protein EngB (210 aa).

The EngB-type G domain maps to 30–204 (QGYEVAFAGR…YRVLADWMEL (175 aa)). Residues 38–45 (GRSNAGKS), 64–68 (GRTQL), 82–85 (DLPG), 149–152 (TKAD), and 182–185 (LFSA) contribute to the GTP site. The Mg(2+) site is built by S45 and T66.

Belongs to the TRAFAC class TrmE-Era-EngA-EngB-Septin-like GTPase superfamily. EngB GTPase family. The cofactor is Mg(2+).

Necessary for normal cell division and for the maintenance of normal septation. The protein is Probable GTP-binding protein EngB of Pseudomonas putida (strain ATCC 47054 / DSM 6125 / CFBP 8728 / NCIMB 11950 / KT2440).